The chain runs to 331 residues: uncharacterized protein (331 aa).

5 Pentapeptide repeat domains span residues 50-89 (ENLQ…RLGH), 90-129 (CQMN…NFKG), 140-179 (ANLR…NLQE), 185-224 (ANLR…KLTG), and 230-269 (TNLS…NLTQ).

This is an uncharacterized protein from Synechocystis sp. (strain ATCC 27184 / PCC 6803 / Kazusa).